We begin with the raw amino-acid sequence, 293 residues long: Probable xyloglucan endotransglucosylase/hydrolase protein 5 (293 aa).

A signal peptide spans 1-21 (MGRLSSTLCLTFLILATVAFG). A GH16 domain is found at 23–220 (PPKKSINVPF…WEKAPFVASY (198 aa)). The Nucleophile role is filled by glutamate 106. The active-site Proton donor is the glutamate 110. Glutamate 110 is a xyloglucan binding site. An N-linked (GlcNAc...) asparagine glycan is attached at asparagine 114. Residues 123–125 (QTN), 133–135 (NRE), 199–200 (DW), and glycine 204 each bind xyloglucan. Disulfide bonds link cysteine 228/cysteine 237 and cysteine 274/cysteine 287. Position 279 (arginine 279) interacts with xyloglucan.

It belongs to the glycosyl hydrolase 16 family. XTH group 1 subfamily. Post-translationally, contains at least one intrachain disulfide bond essential for its enzymatic activity. Root specific.

It localises to the secreted. Its subcellular location is the cell wall. The protein resides in the extracellular space. The protein localises to the apoplast. It catalyses the reaction breaks a beta-(1-&gt;4) bond in the backbone of a xyloglucan and transfers the xyloglucanyl segment on to O-4 of the non-reducing terminal glucose residue of an acceptor, which can be a xyloglucan or an oligosaccharide of xyloglucan.. Catalyzes xyloglucan endohydrolysis (XEH) and/or endotransglycosylation (XET). Cleaves and religates xyloglucan polymers, an essential constituent of the primary cell wall, and thereby participates in cell wall construction of growing tissues. In Arabidopsis thaliana (Mouse-ear cress), this protein is Probable xyloglucan endotransglucosylase/hydrolase protein 5 (XTH5).